Here is a 176-residue protein sequence, read N- to C-terminus: ATP synthase subunit delta (176 aa).

It belongs to the ATPase delta chain family. F-type ATPases have 2 components, F(1) - the catalytic core - and F(0) - the membrane proton channel. F(1) has five subunits: alpha(3), beta(3), gamma(1), delta(1), epsilon(1). F(0) has three main subunits: a(1), b(2) and c(10-14). The alpha and beta chains form an alternating ring which encloses part of the gamma chain. F(1) is attached to F(0) by a central stalk formed by the gamma and epsilon chains, while a peripheral stalk is formed by the delta and b chains.

Its subcellular location is the cell membrane. F(1)F(0) ATP synthase produces ATP from ADP in the presence of a proton or sodium gradient. F-type ATPases consist of two structural domains, F(1) containing the extramembraneous catalytic core and F(0) containing the membrane proton channel, linked together by a central stalk and a peripheral stalk. During catalysis, ATP synthesis in the catalytic domain of F(1) is coupled via a rotary mechanism of the central stalk subunits to proton translocation. Its function is as follows. This protein is part of the stalk that links CF(0) to CF(1). It either transmits conformational changes from CF(0) to CF(1) or is implicated in proton conduction. This chain is ATP synthase subunit delta, found in Wigglesworthia glossinidia brevipalpis.